A 451-amino-acid chain; its full sequence is Tubulin alpha chain (451 aa).

The short motif at 1-4 is the MREC motif element; the sequence is MREC. Gln-11 serves as a coordination point for GTP. Lys-40 is modified (N6-acetyllysine). Glu-71, Ser-140, Gly-144, Thr-145, Thr-179, Asn-206, and Asn-228 together coordinate GTP. Residue Glu-71 coordinates Mg(2+). Glu-254 is a catalytic residue. The interval 432-451 is disordered; that stretch reads YEEVGVDSVEGEGEEEGEEY. At Glu-445 the chain carries 5-glutamyl polyglutamate.

Belongs to the tubulin family. In terms of assembly, dimer of alpha and beta chains. A typical microtubule is a hollow water-filled tube with an outer diameter of 25 nm and an inner diameter of 15 nM. Alpha-beta heterodimers associate head-to-tail to form protofilaments running lengthwise along the microtubule wall with the beta-tubulin subunit facing the microtubule plus end conferring a structural polarity. Microtubules usually have 13 protofilaments but different protofilament numbers can be found in some organisms and specialized cells. Mg(2+) is required as a cofactor. In terms of processing, some glutamate residues at the C-terminus are polyglycylated, resulting in polyglycine chains on the gamma-carboxyl group. Glycylation is mainly limited to tubulin incorporated into axonemes (cilia and flagella) whereas glutamylation is prevalent in neuronal cells, centrioles, axonemes, and the mitotic spindle. Both modifications can coexist on the same protein on adjacent residues, and lowering polyglycylation levels increases polyglutamylation, and reciprocally. The precise function of polyglycylation is still unclear. Post-translationally, some glutamate residues at the C-terminus are polyglutamylated, resulting in polyglutamate chains on the gamma-carboxyl group. Polyglutamylation plays a key role in microtubule severing by spastin (SPAST). SPAST preferentially recognizes and acts on microtubules decorated with short polyglutamate tails: severing activity by SPAST increases as the number of glutamates per tubulin rises from one to eight, but decreases beyond this glutamylation threshold. Acetylation of alpha chains at Lys-40 is located inside the microtubule lumen. This modification has been correlated with increased microtubule stability, intracellular transport and ciliary assembly. In terms of processing, undergoes a tyrosination/detyrosination cycle, the cyclic removal and re-addition of a C-terminal tyrosine residue by the enzymes tubulin tyrosine carboxypeptidase (MATCAP, VASH1 or VASH2) and tubulin tyrosine ligase (TTL), respectively. Post-translationally, tyrosination promotes microtubule interaction with CAP-Gly microtubule plus-end tracking proteins. Tyrosinated tubulins regulate the initiation of dynein-driven motility. Detyrosination is involved in metaphase plate congression by guiding chromosomes during mitosis. Detyrosination increases microtubules-dependent mechanotransduction in dystrophic cardiac and skeletal muscle. In cardiomyocytes, detyrosinated microtubules are required to resist to contractile compression during contraction.

The protein resides in the cytoplasm. It is found in the cytoskeleton. It carries out the reaction GTP + H2O = GDP + phosphate + H(+). Its function is as follows. Tubulin is the major constituent of microtubules, a cylinder consisting of laterally associated linear protofilaments composed of alpha- and beta-tubulin heterodimers. Microtubules grow by the addition of GTP-tubulin dimers to the microtubule end, where a stabilizing cap forms. Below the cap, tubulin dimers are in GDP-bound state, owing to GTPase activity of alpha-tubulin. The sequence is that of Tubulin alpha chain from Torpedo marmorata (Marbled electric ray).